A 446-amino-acid polypeptide reads, in one-letter code: Low-affinity gluconate transporter (446 aa).

Residue Met1 is a topological domain, cytoplasmic. The chain crosses the membrane as a helical span at residues 2–22; the sequence is TTLTLVLTAVGSVLLLLFLVM. At 23–26 the chain is on the periplasmic side; that stretch reads KARM. Residues 27–47 traverse the membrane as a helical segment; the sequence is HAFLALMVVSMGAGLFSGMPL. Residues 48 to 58 are Cytoplasmic-facing; it reads DKIAATMEKGM. A helical membrane pass occupies residues 59–79; sequence GGTLGFLAVVVALGAMFGKIL. Residues 80 to 109 are Periplasmic-facing; sequence HETGAVDQIAVKMLKSFGHSRAHYAIGLAG. The chain crosses the membrane as a helical span at residues 110–130; that stretch reads LVCALPLFFEVAIVLLISVAF. The Cytoplasmic segment spans residues 131–142; it reads SMARHTGTNLVK. Residues 143–163 traverse the membrane as a helical segment; that stretch reads LVIPLFAGVAAAAAFLVPGPA. Residues 164-176 are Periplasmic-facing; it reads PMLLASQMNADFG. The helical transmembrane segment at 177 to 197 threads the bilayer; it reads WMILIGLCAAIPGMIIAGPLW. Topologically, residues 198-225 are cytoplasmic; that stretch reads GNFISRYVELHIPDDISEPHLGEGKMPS. Residues 226–246 traverse the membrane as a helical segment; that stretch reads FGFSLSLILLPLVLVGLKTIA. Over 247–261 the chain is Periplasmic; sequence ARFVPEGSTAYEWFE. The chain crosses the membrane as a helical span at residues 262–282; sequence FIGHPFTAILVACLVAIYGLA. At 283-294 the chain is on the cytoplasmic side; it reads MRQGMPKDKVME. Residues 295-315 traverse the membrane as a helical segment; that stretch reads ICGHALQPAGIILLVIGAGGV. The Periplasmic segment spans residues 316–330; sequence FKQVLVDSGVGPALG. A helical transmembrane segment spans residues 331–351; sequence EALTGMGLPIAITCFVLAAAV. Position 352 (Arg352) is a topological domain, cytoplasmic. A helical transmembrane segment spans residues 353-373; that stretch reads IIQGSATVACLTAVGLVMPVI. At 374–387 the chain is on the periplasmic side; the sequence is EQLNYSGAQMAALS. The chain crosses the membrane as a helical span at residues 388-408; it reads ICIAGGSIVVSHVNDAGFWLF. The Cytoplasmic portion of the chain corresponds to 409 to 424; sequence GKFTGATEAETLKTWT. A helical transmembrane segment spans residues 425 to 445; the sequence is MMETILGTVGAIVGMIAFQLL. Position 446 (Ser446) is a topological domain, periplasmic.

The protein belongs to the GntP permease family.

It is found in the cell inner membrane. Part of the gluconate utilization system Gnt-I; low-affinity intake of gluconate. This chain is Low-affinity gluconate transporter (gntU), found in Escherichia coli O157:H7.